A 244-amino-acid chain; its full sequence is MIRTDAKDGALVLFSGGQDSATCVAWALERYQTVETLGFDYGQRHRVELECREGVREALKRDFPAWSDRLGDDHMIDLSVLGAISDTAMTRTIEIETAANGLPNTFVPGRNLMFMTIAAAIAYRRGLRVLVGGMCETDFSGYPDCRDDTMKALQVALNLGMDTRVVLETPLMWLDKAQTWQLAEQLGGEALVELIRVETHTCYVGERAELHDWGFGCGECPACKLRKRGYEAYLKGERVTEAPL.

Residue 14-24 (FSGGQDSATCV) participates in ATP binding. The Zn(2+) site is built by C202, C217, C220, and C223.

The protein belongs to the QueC family. Requires Zn(2+) as cofactor.

The enzyme catalyses 7-carboxy-7-deazaguanine + NH4(+) + ATP = 7-cyano-7-deazaguanine + ADP + phosphate + H2O + H(+). Its pathway is purine metabolism; 7-cyano-7-deazaguanine biosynthesis. Catalyzes the ATP-dependent conversion of 7-carboxy-7-deazaguanine (CDG) to 7-cyano-7-deazaguanine (preQ(0)). The sequence is that of 7-cyano-7-deazaguanine synthase from Burkholderia lata (strain ATCC 17760 / DSM 23089 / LMG 22485 / NCIMB 9086 / R18194 / 383).